The chain runs to 391 residues: Alkanesulfonate monooxygenase (391 aa).

Belongs to the SsuD family.

The catalysed reaction is an alkanesulfonate + FMNH2 + O2 = an aldehyde + FMN + sulfite + H2O + 2 H(+). Functionally, catalyzes the desulfonation of aliphatic sulfonates. This chain is Alkanesulfonate monooxygenase, found in Paracidovorax citrulli (strain AAC00-1) (Acidovorax citrulli).